The chain runs to 440 residues: Protein CyaD (440 aa).

Residues 1–55 (MRRALRELAARHGRVLAASWRQRHRRPAGWFDPVETEFLPSALSLQERPISPTAR) are Cytoplasmic-facing. A helical membrane pass occupies residues 56–75 (WLARILMALAAGALVWSVVG). The Periplasmic portion of the chain corresponds to 76 to 440 (KTEIVVHAAG…RHAGESLGER (365 aa)).

The protein belongs to the membrane fusion protein (MFP) (TC 8.A.1) family.

The protein localises to the cell inner membrane. CyaD is necessary for transport of calmodulin-sensitive adenylate cyclase-hemolysin (cyclolysin). This is Protein CyaD (cyaD) from Bordetella pertussis (strain ATCC 9797 / DSM 5571 / CCUG 30873 / LMG 14455 / NCTC 10739 / 18323).